The primary structure comprises 551 residues: Probable metalloreductase AIM14 (551 aa).

The next 7 membrane-spanning stretches (helical) occupy residues 25-45, 67-87, 100-117, 138-155, 172-192, 199-221, and 225-247; these read GIIIFAISVIHILFFLLVKFI, PTWMLITLWILIIFFIGGANI, RYGRIAYCLLPLNIYLIL, KWLSRLISICTLIHAIGY, FLNFLGIVVFVMFAVLIIVSI, YYSLFYIIHNITAWSMVVLIIFH, and GVTIFGIICLILMCYQLLYLRFY. A Ferric oxidoreductase domain is found at 102-217; that stretch reads GRIAYCLLPL…NITAWSMVVL (116 aa). The FAD-binding FR-type domain occupies 247–369; sequence YKSYPVNNLK…GGSGISFGLP (123 aa). Residues 440–492 form a disordered region; sequence QDESHAKVEQTQGEEEVDGLLNQDENGIPLQSMKKESFPKKEEGEDEEKSSKD. Basic and acidic residues predominate over residues 472-492; sequence MKKESFPKKEEGEDEEKSSKD.

Belongs to the ferric reductase (FRE) family. AIM14 subfamily.

It localises to the membrane. In terms of biological role, probable cell surface metalloreductase. May be involved in iron or copper homeostasis. This is Probable metalloreductase AIM14 (AIM14) from Candida tropicalis (strain ATCC MYA-3404 / T1) (Yeast).